The following is a 289-amino-acid chain: NAD kinase (289 aa).

The Proton acceptor role is filled by aspartate 82. Residues 82-83 (DG), arginine 87, 150-151 (NE), lysine 161, arginine 178, aspartate 180, 191-196 (TAYAMS), alanine 215, and glutamine 250 contribute to the NAD(+) site.

It belongs to the NAD kinase family. Requires a divalent metal cation as cofactor.

The protein resides in the cytoplasm. The enzyme catalyses NAD(+) + ATP = ADP + NADP(+) + H(+). Functionally, involved in the regulation of the intracellular balance of NAD and NADP, and is a key enzyme in the biosynthesis of NADP. Catalyzes specifically the phosphorylation on 2'-hydroxyl of the adenosine moiety of NAD to yield NADP. The sequence is that of NAD kinase from Methanosarcina mazei (strain ATCC BAA-159 / DSM 3647 / Goe1 / Go1 / JCM 11833 / OCM 88) (Methanosarcina frisia).